The chain runs to 371 residues: Aspartate-semialdehyde dehydrogenase (371 aa).

NADP(+)-binding positions include 11–14, 38–39, and glutamine 75; these read RGMV and TS. Phosphate is bound at residue arginine 104. The Acyl-thioester intermediate role is filled by cysteine 137. Residue glutamine 164 participates in substrate binding. 167-168 serves as a coordination point for NADP(+); the sequence is SG. Glutamate 243 is a binding site for substrate. Lysine 246 contacts phosphate. Residue arginine 269 participates in substrate binding. Histidine 276 (proton acceptor) is an active-site residue. Glutamine 352 is a binding site for NADP(+).

Belongs to the aspartate-semialdehyde dehydrogenase family. Homodimer.

It carries out the reaction L-aspartate 4-semialdehyde + phosphate + NADP(+) = 4-phospho-L-aspartate + NADPH + H(+). It participates in amino-acid biosynthesis; L-lysine biosynthesis via DAP pathway; (S)-tetrahydrodipicolinate from L-aspartate: step 2/4. The protein operates within amino-acid biosynthesis; L-methionine biosynthesis via de novo pathway; L-homoserine from L-aspartate: step 2/3. Its pathway is amino-acid biosynthesis; L-threonine biosynthesis; L-threonine from L-aspartate: step 2/5. In terms of biological role, catalyzes the NADPH-dependent formation of L-aspartate-semialdehyde (L-ASA) by the reductive dephosphorylation of L-aspartyl-4-phosphate. This chain is Aspartate-semialdehyde dehydrogenase, found in Buchnera aphidicola subsp. Schizaphis graminum (strain Sg).